The following is a 111-amino-acid chain: Large ribosomal subunit protein uL22 (111 aa).

It belongs to the universal ribosomal protein uL22 family. As to quaternary structure, part of the 50S ribosomal subunit.

In terms of biological role, this protein binds specifically to 23S rRNA; its binding is stimulated by other ribosomal proteins, e.g. L4, L17, and L20. It is important during the early stages of 50S assembly. It makes multiple contacts with different domains of the 23S rRNA in the assembled 50S subunit and ribosome. The globular domain of the protein is located near the polypeptide exit tunnel on the outside of the subunit, while an extended beta-hairpin is found that lines the wall of the exit tunnel in the center of the 70S ribosome. This is Large ribosomal subunit protein uL22 from Geotalea daltonii (strain DSM 22248 / JCM 15807 / FRC-32) (Geobacter daltonii).